The primary structure comprises 293 residues: Ribosomal protein L11 methyltransferase (293 aa).

Residues T145, G166, D188, and N230 each contribute to the S-adenosyl-L-methionine site.

The protein belongs to the methyltransferase superfamily. PrmA family.

It is found in the cytoplasm. The catalysed reaction is L-lysyl-[protein] + 3 S-adenosyl-L-methionine = N(6),N(6),N(6)-trimethyl-L-lysyl-[protein] + 3 S-adenosyl-L-homocysteine + 3 H(+). Its function is as follows. Methylates ribosomal protein L11. This Mannheimia succiniciproducens (strain KCTC 0769BP / MBEL55E) protein is Ribosomal protein L11 methyltransferase.